A 215-amino-acid polypeptide reads, in one-letter code: Large ribosomal subunit protein uL1 (215 aa).

The protein belongs to the universal ribosomal protein uL1 family. Part of the 50S ribosomal subunit.

In terms of biological role, binds directly to 23S rRNA. Probably involved in E site tRNA release. Its function is as follows. Protein L1 is also a translational repressor protein, it controls the translation of its operon by binding to its mRNA. The sequence is that of Large ribosomal subunit protein uL1 from Archaeoglobus fulgidus (strain ATCC 49558 / DSM 4304 / JCM 9628 / NBRC 100126 / VC-16).